The following is a 208-amino-acid chain: Cytochrome c biogenesis ATP-binding export protein CcmA (208 aa).

One can recognise an ABC transporter domain in the interval 3 to 206 (LSGKDLTAYR…LEKFLPPQEK (204 aa)). 35 to 42 (GPNGIGKS) contacts ATP.

It belongs to the ABC transporter superfamily. CcmA exporter (TC 3.A.1.107) family. As to quaternary structure, the complex is composed of two ATP-binding proteins (CcmA) and two transmembrane proteins (CcmB).

The protein resides in the cell inner membrane. It carries out the reaction heme b(in) + ATP + H2O = heme b(out) + ADP + phosphate + H(+). Its function is as follows. Part of the ABC transporter complex CcmAB involved in the biogenesis of c-type cytochromes; once thought to export heme, this seems not to be the case, but its exact role is uncertain. Responsible for energy coupling to the transport system. In Bartonella henselae (strain ATCC 49882 / DSM 28221 / CCUG 30454 / Houston 1) (Rochalimaea henselae), this protein is Cytochrome c biogenesis ATP-binding export protein CcmA.